The following is a 269-amino-acid chain: Diaminopimelate epimerase (269 aa).

Substrate contacts are provided by N13, Q47, and N65. C74 acts as the Proton donor in catalysis. Substrate contacts are provided by residues 75–76, N149, N182, and 200–201; these read GN and ER. The active-site Proton acceptor is C209. 210 to 211 provides a ligand contact to substrate; it reads GT.

It belongs to the diaminopimelate epimerase family. As to quaternary structure, homodimer.

It localises to the cytoplasm. It carries out the reaction (2S,6S)-2,6-diaminopimelate = meso-2,6-diaminopimelate. Its pathway is amino-acid biosynthesis; L-lysine biosynthesis via DAP pathway; DL-2,6-diaminopimelate from LL-2,6-diaminopimelate: step 1/1. Its function is as follows. Catalyzes the stereoinversion of LL-2,6-diaminopimelate (L,L-DAP) to meso-diaminopimelate (meso-DAP), a precursor of L-lysine and an essential component of the bacterial peptidoglycan. The sequence is that of Diaminopimelate epimerase from Erythrobacter litoralis (strain HTCC2594).